A 149-amino-acid chain; its full sequence is D-aminoacyl-tRNA deacylase (149 aa).

A Gly-cisPro motif, important for rejection of L-amino acids motif is present at residues 137–138 (GP).

The protein belongs to the DTD family. As to quaternary structure, homodimer.

The protein localises to the cytoplasm. It catalyses the reaction glycyl-tRNA(Ala) + H2O = tRNA(Ala) + glycine + H(+). It carries out the reaction a D-aminoacyl-tRNA + H2O = a tRNA + a D-alpha-amino acid + H(+). In terms of biological role, an aminoacyl-tRNA editing enzyme that deacylates mischarged D-aminoacyl-tRNAs. Also deacylates mischarged glycyl-tRNA(Ala), protecting cells against glycine mischarging by AlaRS. Acts via tRNA-based rather than protein-based catalysis; rejects L-amino acids rather than detecting D-amino acids in the active site. By recycling D-aminoacyl-tRNA to D-amino acids and free tRNA molecules, this enzyme counteracts the toxicity associated with the formation of D-aminoacyl-tRNA entities in vivo and helps enforce protein L-homochirality. This chain is D-aminoacyl-tRNA deacylase, found in Clostridioides difficile (strain 630) (Peptoclostridium difficile).